The chain runs to 594 residues: DNA mismatch repair protein MutL (594 aa).

Belongs to the DNA mismatch repair MutL/HexB family.

This protein is involved in the repair of mismatches in DNA. It is required for dam-dependent methyl-directed DNA mismatch repair. May act as a 'molecular matchmaker', a protein that promotes the formation of a stable complex between two or more DNA-binding proteins in an ATP-dependent manner without itself being part of a final effector complex. The polypeptide is DNA mismatch repair protein MutL (Rhizorhabdus wittichii (strain DSM 6014 / CCUG 31198 / JCM 15750 / NBRC 105917 / EY 4224 / RW1) (Sphingomonas wittichii)).